We begin with the raw amino-acid sequence, 251 residues long: Precorrin-4 C(11)-methyltransferase (251 aa).

The protein belongs to the precorrin methyltransferase family.

The enzyme catalyses precorrin-4 + S-adenosyl-L-methionine = precorrin-5 + S-adenosyl-L-homocysteine. Its pathway is cofactor biosynthesis; adenosylcobalamin biosynthesis; cob(II)yrinate a,c-diamide from precorrin-2 (aerobic route): step 4/10. Functionally, catalyzes the methylation of C-11 in precorrin-4 to form precorrin-5. In Mycobacterium tuberculosis (strain CDC 1551 / Oshkosh), this protein is Precorrin-4 C(11)-methyltransferase (cobM).